The sequence spans 181 residues: ATP synthase subunit delta (181 aa).

This sequence belongs to the ATPase delta chain family. F-type ATPases have 2 components, F(1) - the catalytic core - and F(0) - the membrane proton channel. F(1) has five subunits: alpha(3), beta(3), gamma(1), delta(1), epsilon(1). F(0) has three main subunits: a(1), b(2) and c(10-14). The alpha and beta chains form an alternating ring which encloses part of the gamma chain. F(1) is attached to F(0) by a central stalk formed by the gamma and epsilon chains, while a peripheral stalk is formed by the delta and b chains.

It is found in the cell membrane. F(1)F(0) ATP synthase produces ATP from ADP in the presence of a proton or sodium gradient. F-type ATPases consist of two structural domains, F(1) containing the extramembraneous catalytic core and F(0) containing the membrane proton channel, linked together by a central stalk and a peripheral stalk. During catalysis, ATP synthesis in the catalytic domain of F(1) is coupled via a rotary mechanism of the central stalk subunits to proton translocation. In terms of biological role, this protein is part of the stalk that links CF(0) to CF(1). It either transmits conformational changes from CF(0) to CF(1) or is implicated in proton conduction. The sequence is that of ATP synthase subunit delta from Mycoplasmoides gallisepticum (strain R(low / passage 15 / clone 2)) (Mycoplasma gallisepticum).